The sequence spans 576 residues: Formate--tetrahydrofolate ligase (576 aa).

64–71 (TPLGEGKT) contributes to the ATP binding site.

Belongs to the formate--tetrahydrofolate ligase family.

The catalysed reaction is (6S)-5,6,7,8-tetrahydrofolate + formate + ATP = (6R)-10-formyltetrahydrofolate + ADP + phosphate. It participates in one-carbon metabolism; tetrahydrofolate interconversion. The chain is Formate--tetrahydrofolate ligase from Aeromonas hydrophila subsp. hydrophila (strain ATCC 7966 / DSM 30187 / BCRC 13018 / CCUG 14551 / JCM 1027 / KCTC 2358 / NCIMB 9240 / NCTC 8049).